We begin with the raw amino-acid sequence, 145 residues long: Phospholipase A2 phospholipin (145 aa).

The N-terminal stretch at Met1–Arg15 is a signal peptide. Residues Trp24, Gly26, and Gly28 each contribute to the Ca(2+) site. Cystine bridges form between Cys25–Cys46, Cys45–Cys84, Cys52–Cys77, Cys75–Cys116, and Cys121–Cys132. The active site involves His49. Position 50 (Asp50) interacts with Ca(2+). Positions Lys124–Arg128 are excised as a propeptide.

This sequence belongs to the phospholipase A2 family. Group III subfamily. As to quaternary structure, heterodimer composed of a small subunit and a large subunit; disulfid-linked. Ca(2+) is required as a cofactor. Expressed by the venom gland.

It localises to the secreted. It catalyses the reaction a 1,2-diacyl-sn-glycero-3-phosphocholine + H2O = a 1-acyl-sn-glycero-3-phosphocholine + a fatty acid + H(+). Functionally, scorpion venom phospholipase A2 (PLA2) that contains enzymatic activity, but does not inhibit ryanodine receptors in contrary to imperatoxin-1, another heterodimer of P.imperator venom. PLA2 catalyzes the calcium-dependent hydrolysis of the 2-acyl groups in 3-sn-phosphoglycerides. This is Phospholipase A2 phospholipin from Pandinus imperator (Emperor scorpion).